The primary structure comprises 993 residues: ATP-dependent DNA helicase MPH1 (993 aa).

Residues 94–261 (IVHKSLFQNT…EVVNNLDISK (168 aa)) form the Helicase ATP-binding domain. 107-114 (IPTGMGKT) contacts ATP. The short motif at 209–212 (DEAH) is the DEAH box element. The Helicase C-terminal domain maps to 507-655 (KVERLHRQEQ…CIDYKKSDRI (149 aa)). The tract at residues 530–551 (NDKLERSARRTGSSEEAQISGM) is disordered. Residues 539 to 551 (RTGSSEEAQISGM) show a composition bias toward polar residues. The FKH1-binding region stretch occupies residues 751 to 810 (LVTSNENPSKKRKIFKALDNLENDSTEEASSSLETEDEEVSDDNNVFIAEGQNGCQKDLE). Phosphothreonine is present on residues threonine 776 and threonine 785.

It belongs to the DEAD box helicase family. DEAH subfamily. FANCM sub-subfamily. In terms of assembly, interacts with the MHF histone-fold complex composed of MHF1 and MHF2 to form the FANCM-MHF complex. Interacts with FHK1. Phosphorylation at both Thr-776 and Thr-785 is required for the interaction with FKH1.

The protein resides in the nucleus. It carries out the reaction ATP + H2O = ADP + phosphate + H(+). Its function is as follows. ATP-dependent DNA helicase involved in DNA damage repair by homologous recombination and in genome maintenance. Capable of unwinding D-loops. Plays a role in limiting crossover recombinants during mitotic DNA double-strand break (DSB) repair. Prevents crossovers between ectopic sequences by removing substrates for MUS81-MMS4 or RAD1-RAD10 cleavage. Component of a FANCM-MHF complex which promotes gene conversion at blocked replication forks, probably by reversal of the stalled fork. Binds to flap-structured DNA but not to non-flap nicked DNA, and participates in Okazaki fragment processing by stimulating the endonuclease activities of FEN1 and DNA2. Involved in recombination donor preference during mating-type switching via interaction with FKH1. The chain is ATP-dependent DNA helicase MPH1 from Saccharomyces cerevisiae (strain ATCC 204508 / S288c) (Baker's yeast).